The chain runs to 153 residues: Small ribosomal subunit protein uS17 (153 aa).

The protein belongs to the universal ribosomal protein uS17 family.

This Anopheles gambiae (African malaria mosquito) protein is Small ribosomal subunit protein uS17 (RpS11).